A 318-amino-acid chain; its full sequence is Type II restriction enzyme HaeIII (318 aa).

It carries out the reaction Endonucleolytic cleavage of DNA to give specific double-stranded fragments with terminal 5'-phosphates.. Its function is as follows. A P subtype restriction enzyme that recognizes the double-stranded sequence 5'-GGCC-3' and cleaves after G-2. In Haemophilus aegyptius, this protein is Type II restriction enzyme HaeIII (haeIIIR).